We begin with the raw amino-acid sequence, 387 residues long: MLQRIYLDNNATTRIDPKVKEIMDPFLRDHYGNPSSLHQFGTETHPAIAEALDKLYKGINARDIDDVIITSCATESNNWVLKGVYFDECLKKGKNHIVTTVAEHPAVRSTCNFLESLGVEVTYLPINEHGSITAEQVKEAITEKTALVSVMWANNETGLIFPIEEIGAICKEKGVLFHTDAVQAIGKIPVDVLKANADFLSFSAHKFHGPKGIGGLYIRSGVGLTPLFHGGEHMNGRRSGTLNVPYIVGMGEAMKLAVEHLDYEKEVVGKLRDKLEEALLKIPDVMVVGDRIHRVPNTTLVSVRGIEGEAMLWDLNRSNIAASTGSACASEDLEANPVMVAIGASKELAHTAIRLSLSRFNTEAEIDKTIEVFSQAAVRLRNISSSY.

Pyridoxal 5'-phosphate is bound by residues 73–74 (AT), Asn-155, Gln-183, and 203–205 (SAH). The residue at position 206 (Lys-206) is an N6-(pyridoxal phosphate)lysine. Pyridoxal 5'-phosphate is bound at residue Thr-241. The active-site Cysteine persulfide intermediate is Cys-328. Cys-328 contacts [2Fe-2S] cluster.

It belongs to the class-V pyridoxal-phosphate-dependent aminotransferase family. NifS/IscS subfamily. Homodimer. Forms a heterotetramer with IscU, interacts with other sulfur acceptors. It depends on pyridoxal 5'-phosphate as a cofactor.

It localises to the cytoplasm. It catalyses the reaction (sulfur carrier)-H + L-cysteine = (sulfur carrier)-SH + L-alanine. It participates in cofactor biosynthesis; iron-sulfur cluster biosynthesis. Its function is as follows. Master enzyme that delivers sulfur to a number of partners involved in Fe-S cluster assembly, tRNA modification or cofactor biosynthesis. Catalyzes the removal of elemental sulfur atoms from cysteine to produce alanine. Functions as a sulfur delivery protein for Fe-S cluster synthesis onto IscU, an Fe-S scaffold assembly protein, as well as other S acceptor proteins. This is Cysteine desulfurase IscS from Helicobacter pylori (strain ATCC 700392 / 26695) (Campylobacter pylori).